A 109-amino-acid polypeptide reads, in one-letter code: Thiosulfate sulfurtransferase GlpE (109 aa).

The 89-residue stretch at 16–104 (REQGAVVVDI…WRTTYPAEIS (89 aa)) folds into the Rhodanese domain. C64 serves as the catalytic Cysteine persulfide intermediate.

The protein belongs to the GlpE family.

Its subcellular location is the cytoplasm. The catalysed reaction is thiosulfate + hydrogen cyanide = thiocyanate + sulfite + 2 H(+). It catalyses the reaction thiosulfate + [thioredoxin]-dithiol = [thioredoxin]-disulfide + hydrogen sulfide + sulfite + 2 H(+). Functionally, transferase that catalyzes the transfer of sulfur from thiosulfate to thiophilic acceptors such as cyanide or dithiols. May function in a CysM-independent thiosulfate assimilation pathway by catalyzing the conversion of thiosulfate to sulfite, which can then be used for L-cysteine biosynthesis. This Pseudomonas fluorescens (strain SBW25) protein is Thiosulfate sulfurtransferase GlpE.